We begin with the raw amino-acid sequence, 424 residues long: Kynureninase (424 aa).

Pyridoxal 5'-phosphate is bound by residues Leu109, Thr110, 137-140, Asp222, His225, and Tyr247; that span reads FPSD. Position 248 is an N6-(pyridoxal phosphate)lysine (Lys248). Trp278 and Asn306 together coordinate pyridoxal 5'-phosphate.

This sequence belongs to the kynureninase family. As to quaternary structure, homodimer. Pyridoxal 5'-phosphate is required as a cofactor.

It carries out the reaction L-kynurenine + H2O = anthranilate + L-alanine + H(+). The catalysed reaction is 3-hydroxy-L-kynurenine + H2O = 3-hydroxyanthranilate + L-alanine + H(+). It functions in the pathway amino-acid degradation; L-kynurenine degradation; L-alanine and anthranilate from L-kynurenine: step 1/1. The protein operates within cofactor biosynthesis; NAD(+) biosynthesis; quinolinate from L-kynurenine: step 2/3. Catalyzes the cleavage of L-kynurenine (L-Kyn) and L-3-hydroxykynurenine (L-3OHKyn) into anthranilic acid (AA) and 3-hydroxyanthranilic acid (3-OHAA), respectively. The polypeptide is Kynureninase (Koribacter versatilis (strain Ellin345)).